The chain runs to 37 residues: Large ribosomal subunit protein bL36 (37 aa).

It belongs to the bacterial ribosomal protein bL36 family.

The chain is Large ribosomal subunit protein bL36 from Desulfotalea psychrophila (strain LSv54 / DSM 12343).